The sequence spans 136 residues: Large ribosomal subunit protein uL16 (136 aa).

This sequence belongs to the universal ribosomal protein uL16 family. Part of the 50S ribosomal subunit.

Functionally, binds 23S rRNA and is also seen to make contacts with the A and possibly P site tRNAs. The protein is Large ribosomal subunit protein uL16 of Shewanella woodyi (strain ATCC 51908 / MS32).